The chain runs to 336 residues: Effector SCP41 (336 aa).

An N-terminal signal peptide occupies residues 1 to 19; sequence MRTETASLLLLAALSVAEE. 2 disordered regions span residues 59 to 99 and 189 to 230; these read LFSP…STNN and PVGN…GQKG. Residues 63 to 74 are compositionally biased toward low complexity; that stretch reads QQQQQQQQQQQQ.

Interacts with A.thaliana CBP60G; the interaction is direct. Interacts with A.thaliana SARD1. Interacts with G.hirsutum CBP60B.

Its subcellular location is the secreted. The protein resides in the host nucleus. In terms of biological role, effector that binds transcription regulators in the host plant to suppress the host's innate immune response. Inhibits the host plant transcription regulators CBP60G and SARD1. In Verticillium dahliae (strain VdLs.17 / ATCC MYA-4575 / FGSC 10137) (Verticillium wilt), this protein is Effector SCP41.